The sequence spans 393 residues: Bifunctional enzyme Fae/Hps (393 aa).

Residues 1–161 form a formaldehyde-activating enzyme region; the sequence is MYQIGEALVG…YEKDRGAHAV (161 aa). H17 (proton donor) is an active-site residue. Residues D19, L48, K66, T68, and Q83 each contribute to the substrate site. Residues 162-393 form a 3-hexulose-6-phosphate synthase region; that stretch reads MGFKVQRLWD…IDQFRVMTDF (232 aa).

In the N-terminal section; belongs to the formaldehyde-activating enzyme family. This sequence in the C-terminal section; belongs to the HPS/KGPDC family. HPS subfamily.

It catalyses the reaction 5,6,7,8-tetrahydromethanopterin + formaldehyde = 5,10-methylenetetrahydromethanopterin + H2O. The catalysed reaction is D-ribulose 5-phosphate + formaldehyde = D-arabino-hex-3-ulose 6-phosphate. The protein operates within carbohydrate biosynthesis; D-ribose 5-phosphate biosynthesis. Catalyzes the condensation of formaldehyde with tetrahydromethanopterin (H(4)MPT) to 5,10-methylenetetrahydromethanopterin. In terms of biological role, catalyzes the reversible formation of ribulose-5-phosphate and formaldehyde from 3-hexulose-6-phosphate. The polypeptide is Bifunctional enzyme Fae/Hps (Methanosphaerula palustris (strain ATCC BAA-1556 / DSM 19958 / E1-9c)).